Here is a 350-residue protein sequence, read N- to C-terminus: MQKNIYVLYGGPSTEHEVSITSARTLINNLSKEKYNVNAIFVRRNKKFIMKENITEEIKSDEELILDTDLSVIESVSECIRKINPENTVIFPAIHGSYGEDGTIQGFIKVLDLPFVGCNVLGSALCMDKGYTNDIFELNKIPQAKYVVLCKNDDYNLKEIFEKTSKAVYVKPCNAGSSVGVMRAETEEELEKAIQNAFQYDRRILVEEEIIGPELQIAVMGNDNPVASRPGVYQIHDVEFFDYDAKYNDSKTEMLTPFPMDEKLELKARHLAEKVYKLMSLSGFSRVDMFVKDNELWVNEINTVPGLTPHSMFPVLWKCTNDMSVSEVFDNLIGLAVEEYKKNKAYKLER.

The region spanning 133–334 is the ATP-grasp domain; that stretch reads NDIFELNKIP…VSEVFDNLIG (202 aa). Residue 161–216 coordinates ATP; sequence FEKTSKAVYVKPCNAGSSVGVMRAETEEELEKAIQNAFQYDRRILVEEEIIGPELQ. Asp288, Glu300, and Asn302 together coordinate Mg(2+).

This sequence belongs to the D-alanine--D-alanine ligase family. Mg(2+) serves as cofactor. It depends on Mn(2+) as a cofactor.

It is found in the cytoplasm. It catalyses the reaction 2 D-alanine + ATP = D-alanyl-D-alanine + ADP + phosphate + H(+). It participates in cell wall biogenesis; peptidoglycan biosynthesis. In terms of biological role, cell wall formation. This chain is D-alanine--D-alanine ligase, found in Finegoldia magna (strain ATCC 29328 / DSM 20472 / WAL 2508) (Peptostreptococcus magnus).